A 118-amino-acid polypeptide reads, in one-letter code: Co-chaperonin GroES (118 aa).

The protein belongs to the GroES chaperonin family. In terms of assembly, heptamer of 7 subunits arranged in a ring. Interacts with the chaperonin GroEL.

Its subcellular location is the cytoplasm. Functionally, together with the chaperonin GroEL, plays an essential role in assisting protein folding. The GroEL-GroES system forms a nano-cage that allows encapsulation of the non-native substrate proteins and provides a physical environment optimized to promote and accelerate protein folding. GroES binds to the apical surface of the GroEL ring, thereby capping the opening of the GroEL channel. The polypeptide is Co-chaperonin GroES (Helicobacter pylori (strain HPAG1)).